The following is a 391-amino-acid chain: Histamine H4 receptor (391 aa).

Topologically, residues 1–19 (MSESNGTDVLPLTAQVPLA) are extracellular. Asn-5 carries N-linked (GlcNAc...) asparagine glycosylation. A helical transmembrane segment spans residues 20–40 (FLMSLLAFAITIGNAVVILAF). At 41–52 (VADRNLRHRSNY) the chain is on the cytoplasmic side. The chain crosses the membrane as a helical span at residues 53 to 73 (FFLNLAISDFFVGVISIPLYI). At 74-87 (PHTLFNWNFGSGIC) the chain is on the extracellular side. Cys-87 and Cys-166 are disulfide-bonded. The chain crosses the membrane as a helical span at residues 88–108 (MFWLITDYLLCTASVYSIVLI). Over 109–131 (SYDRYQSVSNAVRYRAQHTGILK) the chain is Cytoplasmic. A helical transmembrane segment spans residues 132-152 (IVAQMVAVWILAFLVNGPMIL). Residues 153-174 (ASDSWKNSTNTEECEPGFVTEW) lie on the Extracellular side of the membrane. Residue Asn-159 is glycosylated (N-linked (GlcNAc...) asparagine). A helical membrane pass occupies residues 175-195 (YILAITAFLEFLLPVSLVVYF). The Cytoplasmic segment spans residues 196–306 (SVQIYWSLWK…LLRGRKLARS (111 aa)). The helical transmembrane segment at 307 to 327 (LAVLLSAFAICWAPYCLFTIV) threads the bilayer. The Extracellular segment spans residues 328–343 (LSTYRRGERPKSIWYS). A helical transmembrane segment spans residues 344-364 (IAFWLQWFNSLINPFLYPLCH). Residues 365 to 391 (RRFQKAFWKILCVTKQPAPSQTQSVSS) are Cytoplasmic-facing.

The protein belongs to the G-protein coupled receptor 1 family. Interacts with TSPAN4.

The protein resides in the cell membrane. In terms of biological role, the H4 subclass of histamine receptors could mediate the histamine signals in peripheral tissues. Displays a significant level of constitutive activity (spontaneous activity in the absence of agonist). The protein is Histamine H4 receptor (Hrh4) of Rattus norvegicus (Rat).